The sequence spans 750 residues: NAD(P)H-quinone oxidoreductase subunit 5, chloroplastic (750 aa).

16 helical membrane passes run 9-29 (WIIPFIPFPVPMLIGVGLLLF), 40-60 (WAFPSILLLTIVMMFSLDLSI), 89-109 (IDSLTSIMSILITTVGILVLI), 125-145 (FAYLTLFNISMLGLVTSSNLI), 147-167 (IYVFWELVGMCSYLLIGFWFT), 185-205 (GDFGLLLGILGLYWITGSLEF), 219-239 (NEVNIFFLTLVALLLFCGSVA), 258-278 (TPISALIHAATMVAAGIFLVA), 280-300 (LLPLFIVLPAIMNGIAFIGII), 327-347 (LGYMMLALGMGSYRAALFHLI), 354-374 (ALLFLGSGSIIHSMEALVGYS), 396-416 (TSFLVGTLSLCGIPPFACFWS), 425-445 (WLYSPIFAIIACCTAGLTAFY), 554-574 (FSILVLVLFTLFVGTIGISFS), 607-627 (FLTNAAFSVILTFLGIFIASF), and 728-748 (YILLYIFYIVIFILIWYFLFT).

This sequence belongs to the complex I subunit 5 family. As to quaternary structure, NDH is composed of at least 16 different subunits, 5 of which are encoded in the nucleus.

It is found in the plastid. It localises to the chloroplast thylakoid membrane. The enzyme catalyses a plastoquinone + NADH + (n+1) H(+)(in) = a plastoquinol + NAD(+) + n H(+)(out). The catalysed reaction is a plastoquinone + NADPH + (n+1) H(+)(in) = a plastoquinol + NADP(+) + n H(+)(out). Its function is as follows. NDH shuttles electrons from NAD(P)H:plastoquinone, via FMN and iron-sulfur (Fe-S) centers, to quinones in the photosynthetic chain and possibly in a chloroplast respiratory chain. The immediate electron acceptor for the enzyme in this species is believed to be plastoquinone. Couples the redox reaction to proton translocation, and thus conserves the redox energy in a proton gradient. This chain is NAD(P)H-quinone oxidoreductase subunit 5, chloroplastic (ndhF), found in Glycine max (Soybean).